The following is a 118-amino-acid chain: Small ribosomal subunit protein uS13 (118 aa).

Residues 93–118 (RGLPVRGQRTKTNARTRKGPRKPIRK) form a disordered region.

The protein belongs to the universal ribosomal protein uS13 family. As to quaternary structure, part of the 30S ribosomal subunit. Forms a loose heterodimer with protein S19. Forms two bridges to the 50S subunit in the 70S ribosome.

Its function is as follows. Located at the top of the head of the 30S subunit, it contacts several helices of the 16S rRNA. In the 70S ribosome it contacts the 23S rRNA (bridge B1a) and protein L5 of the 50S subunit (bridge B1b), connecting the 2 subunits; these bridges are implicated in subunit movement. Contacts the tRNAs in the A and P-sites. This Pseudomonas fluorescens (strain ATCC BAA-477 / NRRL B-23932 / Pf-5) protein is Small ribosomal subunit protein uS13.